We begin with the raw amino-acid sequence, 292 residues long: Aspartate carbamoyltransferase catalytic subunit (292 aa).

Residues R50 and T51 each coordinate carbamoyl phosphate. K78 is a binding site for L-aspartate. Residues R100, H128, and Q131 each contribute to the carbamoyl phosphate site. L-aspartate contacts are provided by R161 and R211. Carbamoyl phosphate is bound by residues G250 and P251.

The protein belongs to the aspartate/ornithine carbamoyltransferase superfamily. ATCase family. As to quaternary structure, heterododecamer (2C3:3R2) of six catalytic PyrB chains organized as two trimers (C3), and six regulatory PyrI chains organized as three dimers (R2).

The enzyme catalyses carbamoyl phosphate + L-aspartate = N-carbamoyl-L-aspartate + phosphate + H(+). Its pathway is pyrimidine metabolism; UMP biosynthesis via de novo pathway; (S)-dihydroorotate from bicarbonate: step 2/3. Its function is as follows. Catalyzes the condensation of carbamoyl phosphate and aspartate to form carbamoyl aspartate and inorganic phosphate, the committed step in the de novo pyrimidine nucleotide biosynthesis pathway. In Nitratiruptor sp. (strain SB155-2), this protein is Aspartate carbamoyltransferase catalytic subunit.